Consider the following 580-residue polypeptide: MDRNSVTGLALIALIMIVWLQFMSPDKKPVIRESAKKAASVEQVNVPLKPAPVSASDAFGAFASAANGKARKMVVENDLFRATISSKGATLTSLVLKKHLDGALQPVQLVSNRADGALSLLFLTREGRKIDTRDLYFTGGSVDTLHTVTGKESYSVRYRLNVSKNRNILITYSFTGDSYRVGYDVQLNGFSSALAGNEYQLQWDGGLGYTEKNREDEAHNALAGAYLGGSLVKLDAAKDNQAYREEQSGEAKWVAVRNKYFVAALIPAGPTGGFYLDGSKKAGNEFENYLASLKMEVPVSGASLDNSFSLYMGPLDYDIVRAQKAELEKIMDFGWDWLTRPFAEYIILPVFSWMNKFIHNYGLIIIIFAFLIKLVTYPLSLASTKSMKKMAALQPMLKELQDKYKDNPAKLQSELGRIYKEAGVNPLGGCLPVVLQMPLLFAMFYVFRSSIELRQHGFLWAHDLSVPDSILNLGFTIPMYGDHIALMPILMAGTVFVQQKITPTAQTNDQMKIMLYMFPAMMLLFFNNMPSGLGLYYLMFNVFSVAQQFYINSTTTEADMPNVSIAAPARQKKKKSGGGK.

6 helical membrane-spanning segments follow: residues serine 5–proline 25, lysine 259–serine 279, glycine 362–alanine 382, leucine 427–phenylalanine 447, isoleucine 477–valine 497, and isoleucine 513–leucine 533.

Belongs to the OXA1/ALB3/YidC family. Type 1 subfamily. Interacts with the Sec translocase complex via SecD. Specifically interacts with transmembrane segments of nascent integral membrane proteins during membrane integration.

Its subcellular location is the cell inner membrane. Required for the insertion and/or proper folding and/or complex formation of integral membrane proteins into the membrane. Involved in integration of membrane proteins that insert both dependently and independently of the Sec translocase complex, as well as at least some lipoproteins. Aids folding of multispanning membrane proteins. The protein is Membrane protein insertase YidC of Chlorobium phaeovibrioides (strain DSM 265 / 1930) (Prosthecochloris vibrioformis (strain DSM 265)).